Reading from the N-terminus, the 169-residue chain is NADH-quinone oxidoreductase subunit B (169 aa).

Residues Cys42, Cys43, Cys107, and Cys136 each coordinate [4Fe-4S] cluster.

It belongs to the complex I 20 kDa subunit family. NDH-1 is composed of 14 different subunits. Subunits NuoB, C, D, E, F, and G constitute the peripheral sector of the complex. It depends on [4Fe-4S] cluster as a cofactor.

Its subcellular location is the cell inner membrane. The enzyme catalyses a quinone + NADH + 5 H(+)(in) = a quinol + NAD(+) + 4 H(+)(out). Functionally, NDH-1 shuttles electrons from NADH, via FMN and iron-sulfur (Fe-S) centers, to quinones in the respiratory chain. The immediate electron acceptor for the enzyme in this species is believed to be ubiquinone. Couples the redox reaction to proton translocation (for every two electrons transferred, four hydrogen ions are translocated across the cytoplasmic membrane), and thus conserves the redox energy in a proton gradient. This Nitratiruptor sp. (strain SB155-2) protein is NADH-quinone oxidoreductase subunit B.